Reading from the N-terminus, the 806-residue chain is Disintegrin and metalloproteinase domain-containing protein 1b (806 aa).

The first 33 residues, 1-33, serve as a signal peptide directing secretion; sequence MERLKLGKIPEHWCIRLVAMLLLAIIFLPSTFC. The interval 169–188 is disordered; the sequence is CSVTPKDSPGDTSHPPRSRK. Residues 203–397 enclose the Peptidase M12B domain; sequence KYVEMFVVVN…HRGVCLLDEP (195 aa). N-linked (GlcNAc...) asparagine glycosylation occurs at Asn-224. 7 disulfides stabilise this stretch: Cys-313–Cys-392, Cys-353–Cys-376, Cys-355–Cys-361, Cys-462–Cys-482, Cys-635–Cys-647, Cys-641–Cys-653, and Cys-655–Cys-664. His-338 serves as a coordination point for Zn(2+). Residue Glu-339 is part of the active site. Zn(2+)-binding residues include His-342 and His-348. 2 N-linked (GlcNAc...) asparagine glycosylation sites follow: Asn-375 and Asn-476. Positions 406–490 constitute a Disintegrin domain; the sequence is AANCGNGVVE…ACPSDRKAQD (85 aa). The region spanning 631–665 is the EGF-like domain; sequence FSFPCSPSKQCNKHGVCNDLGNCHCSFGFAPPDCK. The segment at 668–694 is disordered; that stretch reads GTGGSVDSGPAVNLSNDSSPGPNSTQS. Residues Asn-680, Asn-683, and Asn-690 are each glycosylated (N-linked (GlcNAc...) asparagine). Polar residues predominate over residues 680-694; the sequence is NLSNDSSPGPNSTQS. The chain crosses the membrane as a helical span at residues 705–725; the sequence is LIVLAVILVLMILLIIICIIS. The Cytoplasmic portion of the chain corresponds to 726-806; it reads AYTKSETASE…KDEDEEEGEE (81 aa). The interval 735–806 is disordered; sequence EAGPSELEEL…KDEDEEEGEE (72 aa). A compositionally biased stretch (acidic residues) spans 740 to 806; it reads ELEELPEGEK…KDEDEEEGEE (67 aa).

In terms of assembly, heterodimer with ADAM2/fertilin subunit beta. As to expression, testis.

It is found in the membrane. May play a role in spermatogenesis and sperm maturation. In Mus musculus (Mouse), this protein is Disintegrin and metalloproteinase domain-containing protein 1b (Adam1b).